A 123-amino-acid chain; its full sequence is Protein Wnt-3 (123 aa).

Ser-1 carries O-palmitoleoyl serine; by PORCN lipidation. Cys-89 and Cys-104 are oxidised to a cystine. N-linked (GlcNAc...) asparagine glycosylation occurs at Asn-90.

The protein belongs to the Wnt family. Post-translationally, palmitoleoylation is required for efficient binding to frizzled receptors. Depalmitoleoylation leads to Wnt signaling pathway inhibition.

The protein localises to the secreted. It localises to the extracellular space. It is found in the extracellular matrix. In terms of biological role, ligand for members of the frizzled family of seven transmembrane receptors. Functions in the canonical Wnt signaling pathway that results in activation of transcription factors of the TCF/LEF family. Required for normal embryonic development. The protein is Protein Wnt-3 (WNT-3) of Eptatretus stoutii (Pacific hagfish).